The following is a 236-amino-acid chain: Ribose-5-phosphate isomerase A (236 aa).

Substrate contacts are provided by residues 31-34 (TGST), 84-87 (DGAD), and 97-100 (KGGG). Glu-106 serves as the catalytic Proton acceptor. Residue Lys-124 coordinates substrate.

This sequence belongs to the ribose 5-phosphate isomerase family. In terms of assembly, homodimer.

It catalyses the reaction aldehydo-D-ribose 5-phosphate = D-ribulose 5-phosphate. The protein operates within carbohydrate degradation; pentose phosphate pathway; D-ribose 5-phosphate from D-ribulose 5-phosphate (non-oxidative stage): step 1/1. Catalyzes the reversible conversion of ribose-5-phosphate to ribulose 5-phosphate. The chain is Ribose-5-phosphate isomerase A from Polynucleobacter necessarius subsp. necessarius (strain STIR1).